Consider the following 409-residue polypeptide: Elongation factor Tu (409 aa).

Residues 10-214 (KPHVNIGTIG…EVDAYIPTPE (205 aa)) form the tr-type G domain. The G1 stretch occupies residues 19–26 (GHVDHGKT). 19–26 (GHVDHGKT) is a GTP binding site. Mg(2+) is bound at residue Thr-26. The G2 stretch occupies residues 60–64 (GITIN). The segment at 81 to 84 (DCPG) is G3. Residues 81–85 (DCPGH) and 136–139 (NKQD) each bind GTP. A G4 region spans residues 136 to 139 (NKQD). Residues 174–176 (SAL) are G5.

This sequence belongs to the TRAFAC class translation factor GTPase superfamily. Classic translation factor GTPase family. EF-Tu/EF-1A subfamily. Monomer.

It is found in the cytoplasm. It catalyses the reaction GTP + H2O = GDP + phosphate + H(+). GTP hydrolase that promotes the GTP-dependent binding of aminoacyl-tRNA to the A-site of ribosomes during protein biosynthesis. The sequence is that of Elongation factor Tu from Acaryochloris marina (strain MBIC 11017).